Here is a 660-residue protein sequence, read N- to C-terminus: UvrABC system protein B (660 aa).

A Helicase ATP-binding domain is found at asparagine 27–arginine 414. Glycine 40–threonine 47 serves as a coordination point for ATP. The Beta-hairpin signature appears at tyrosine 93–isoleucine 116. Positions glutamine 431 to isoleucine 593 constitute a Helicase C-terminal domain. Residues asparagine 603–glutamate 622 form a disordered region. Residues glutamate 624–glutamate 659 form the UVR domain.

Belongs to the UvrB family. As to quaternary structure, forms a heterotetramer with UvrA during the search for lesions. Interacts with UvrC in an incision complex.

It is found in the cytoplasm. The UvrABC repair system catalyzes the recognition and processing of DNA lesions. A damage recognition complex composed of 2 UvrA and 2 UvrB subunits scans DNA for abnormalities. Upon binding of the UvrA(2)B(2) complex to a putative damaged site, the DNA wraps around one UvrB monomer. DNA wrap is dependent on ATP binding by UvrB and probably causes local melting of the DNA helix, facilitating insertion of UvrB beta-hairpin between the DNA strands. Then UvrB probes one DNA strand for the presence of a lesion. If a lesion is found the UvrA subunits dissociate and the UvrB-DNA preincision complex is formed. This complex is subsequently bound by UvrC and the second UvrB is released. If no lesion is found, the DNA wraps around the other UvrB subunit that will check the other stand for damage. The protein is UvrABC system protein B of Staphylococcus saprophyticus subsp. saprophyticus (strain ATCC 15305 / DSM 20229 / NCIMB 8711 / NCTC 7292 / S-41).